The sequence spans 1324 residues: Tetratricopeptide repeat protein 21 homolog (1324 aa).

16 TPR repeats span residues 58 to 91, 414 to 446, 582 to 615, 669 to 702, 737 to 770, 772 to 804, 806 to 837, 847 to 880, 894 to 927, 929 to 961, 963 to 995, 997 to 1029, 1033 to 1066, 1205 to 1238, 1240 to 1272, and 1274 to 1307; these read PALA…NDVA, SPLY…LVEM, SLYH…PRKE, DQLV…QSNF, PGSY…QSKD, QLAE…YKDK, MRLK…DPEP, IQFL…HSRI, ARIC…HETD, KANL…DPHN, EANS…NPQH, HALS…NPRC, SGYN…AAGW, EKCW…NCNC, KAFE…TKER, and PGFG…NPQY.

It belongs to the TTC21 family. As to quaternary structure, component of the IFT complex A (IFT-A) composed of at least che-11, daf-10, dyf-2, ift-139, ift-43 and ifta-1. In terms of tissue distribution, expressed in ciliated sensory neurons in the head and tail.

It is found in the cell projection. Its subcellular location is the cilium. The protein localises to the cytoplasm. The protein resides in the cytoskeleton. It localises to the cilium basal body. It is found in the dendrite. In terms of biological role, component of the IFT complex A (IFT-A), a complex required for retrograde ciliary transport. In particular, may act redundantly with the intraflagellar transport protein ift-43 to regulate the transport of specific ciliary cargo proteins such as che-3 which are related to motility. Functions in cilia biogenesis. The sequence is that of Tetratricopeptide repeat protein 21 homolog from Caenorhabditis elegans.